Consider the following 408-residue polypeptide: 3-phosphoshikimate 1-carboxyvinyltransferase (408 aa).

3 residues coordinate 3-phosphoshikimate: Lys10, Ser11, and Arg15. Residue Lys10 coordinates phosphoenolpyruvate. Gly79 and Arg107 together coordinate phosphoenolpyruvate. Ser150, Ser151, Gln152, Ser179, Glu297, and His324 together coordinate 3-phosphoshikimate. Gln152 provides a ligand contact to phosphoenolpyruvate. Glu297 serves as the catalytic Proton acceptor. Phosphoenolpyruvate contacts are provided by Arg328, Arg369, and Lys394.

It belongs to the EPSP synthase family. As to quaternary structure, monomer.

The protein resides in the cytoplasm. It catalyses the reaction 3-phosphoshikimate + phosphoenolpyruvate = 5-O-(1-carboxyvinyl)-3-phosphoshikimate + phosphate. It participates in metabolic intermediate biosynthesis; chorismate biosynthesis; chorismate from D-erythrose 4-phosphate and phosphoenolpyruvate: step 6/7. Functionally, catalyzes the transfer of the enolpyruvyl moiety of phosphoenolpyruvate (PEP) to the 5-hydroxyl of shikimate-3-phosphate (S3P) to produce enolpyruvyl shikimate-3-phosphate and inorganic phosphate. The sequence is that of 3-phosphoshikimate 1-carboxyvinyltransferase from Corynebacterium efficiens (strain DSM 44549 / YS-314 / AJ 12310 / JCM 11189 / NBRC 100395).